The primary structure comprises 260 residues: Cytochrome c oxidase subunit 2 (260 aa).

The Mitochondrial intermembrane portion of the chain corresponds to 1–39 (MKFEWLFLTIAPCDAAEPWQLGFQDAATPMMQGIIDLHH). Residues 40–61 (DIFFFLILILVFVSRILVRALW) traverse the membrane as a helical segment. At 62–76 (HFHYKKNPIPQRIVH) the chain is on the mitochondrial matrix side. The helical transmembrane segment at 77–104 (GTTIEILRTIFPSIIPMFIAIPSFALLY) threads the bilayer. Residues 105-260 (SMDEVVVDPA…QLIPQTTGEA (156 aa)) are Mitochondrial intermembrane-facing. The Cu cation site is built by His186, Cys221, Glu223, Cys225, and His229. Residue Glu223 participates in Mg(2+) binding.

The protein belongs to the cytochrome c oxidase subunit 2 family. Component of the cytochrome c oxidase (complex IV, CIV), a multisubunit enzyme composed of a catalytic core of 3 subunits and several supernumerary subunits. The complex exists as a monomer or a dimer and forms supercomplexes (SCs) in the inner mitochondrial membrane with ubiquinol-cytochrome c oxidoreductase (cytochrome b-c1 complex, complex III, CIII). Cu cation is required as a cofactor.

The protein resides in the mitochondrion inner membrane. It catalyses the reaction 4 Fe(II)-[cytochrome c] + O2 + 8 H(+)(in) = 4 Fe(III)-[cytochrome c] + 2 H2O + 4 H(+)(out). In terms of biological role, component of the cytochrome c oxidase, the last enzyme in the mitochondrial electron transport chain which drives oxidative phosphorylation. The respiratory chain contains 3 multisubunit complexes succinate dehydrogenase (complex II, CII), ubiquinol-cytochrome c oxidoreductase (cytochrome b-c1 complex, complex III, CIII) and cytochrome c oxidase (complex IV, CIV), that cooperate to transfer electrons derived from NADH and succinate to molecular oxygen, creating an electrochemical gradient over the inner membrane that drives transmembrane transport and the ATP synthase. Cytochrome c oxidase is the component of the respiratory chain that catalyzes the reduction of oxygen to water. Electrons originating from reduced cytochrome c in the intermembrane space (IMS) are transferred via the dinuclear copper A center (CU(A)) of subunit 2 and heme A of subunit 1 to the active site in subunit 1, a binuclear center (BNC) formed by heme A3 and copper B (CU(B)). The BNC reduces molecular oxygen to 2 water molecules using 4 electrons from cytochrome c in the IMS and 4 protons from the mitochondrial matrix. This Glycine max (Soybean) protein is Cytochrome c oxidase subunit 2 (COX2).